Here is a 459-residue protein sequence, read N- to C-terminus: UDP-N-acetylmuramate--L-alanine ligase (459 aa).

118–124 (GTHGKTT) is a binding site for ATP.

Belongs to the MurCDEF family.

It is found in the cytoplasm. It catalyses the reaction UDP-N-acetyl-alpha-D-muramate + L-alanine + ATP = UDP-N-acetyl-alpha-D-muramoyl-L-alanine + ADP + phosphate + H(+). It participates in cell wall biogenesis; peptidoglycan biosynthesis. Cell wall formation. This chain is UDP-N-acetylmuramate--L-alanine ligase, found in Lachnospira eligens (strain ATCC 27750 / DSM 3376 / VPI C15-48 / C15-B4) (Eubacterium eligens).